The primary structure comprises 275 residues: Nuclear egress protein 2 (275 aa).

Residues 1 to 251 are Perinuclear space-facing; sequence MDSYNYRDFA…SERVKRRPVR (251 aa). The tract at residues 197–221 is disordered; that stretch reads CDRSNGIVSPREHRECRERQKRRPT. Residues 252-272 form a helical membrane-spanning segment; sequence IAAAILAFVFVAVILAIATKG. The Nuclear segment spans residues 273–275; sequence RLF.

The protein belongs to the herpesviridae NEC2 protein family. Forms a heterohexameric complex with NEC1. In terms of processing, phosphorylated.

Its subcellular location is the host nucleus inner membrane. Functionally, plays an essential role in virion nuclear egress, the first step of virion release from infected cell. Within the host nucleus, NEC1 interacts with the newly formed capsid through the vertexes and directs it to the inner nuclear membrane by associating with NEC2. Induces the budding of the capsid at the inner nuclear membrane as well as its envelopment into the perinuclear space. There, the NEC1/NEC2 complex promotes the fusion of the enveloped capsid with the outer nuclear membrane and the subsequent release of the viral capsid into the cytoplasm where it will reach the secondary budding sites in the host Golgi or trans-Golgi network. This Equus caballus (Horse) protein is Nuclear egress protein 2.